We begin with the raw amino-acid sequence, 269 residues long: Hydroxyethylthiazole kinase (269 aa).

Methionine 42 provides a ligand contact to substrate. Arginine 118 and serine 164 together coordinate ATP. Substrate is bound at residue glycine 191.

Belongs to the Thz kinase family. Mg(2+) serves as cofactor.

It catalyses the reaction 5-(2-hydroxyethyl)-4-methylthiazole + ATP = 4-methyl-5-(2-phosphooxyethyl)-thiazole + ADP + H(+). The protein operates within cofactor biosynthesis; thiamine diphosphate biosynthesis; 4-methyl-5-(2-phosphoethyl)-thiazole from 5-(2-hydroxyethyl)-4-methylthiazole: step 1/1. Its function is as follows. Catalyzes the phosphorylation of the hydroxyl group of 4-methyl-5-beta-hydroxyethylthiazole (THZ). The sequence is that of Hydroxyethylthiazole kinase from Listeria monocytogenes serotype 4a (strain HCC23).